A 405-amino-acid polypeptide reads, in one-letter code: Glucose-1-phosphate adenylyltransferase 1 (405 aa).

Residues Tyr96, Gly161, 176–177 (EK), and Ser194 contribute to the alpha-D-glucose 1-phosphate site.

The protein belongs to the bacterial/plant glucose-1-phosphate adenylyltransferase family. In terms of assembly, homotetramer.

It carries out the reaction alpha-D-glucose 1-phosphate + ATP + H(+) = ADP-alpha-D-glucose + diphosphate. The protein operates within glycan biosynthesis; glycogen biosynthesis. In terms of biological role, involved in the biosynthesis of ADP-glucose, a building block required for the elongation reactions to produce glycogen. Catalyzes the reaction between ATP and alpha-D-glucose 1-phosphate (G1P) to produce pyrophosphate and ADP-Glc. This Vibrio vulnificus (strain YJ016) protein is Glucose-1-phosphate adenylyltransferase 1.